The primary structure comprises 60 residues: Putative insect toxin Acra6 (60 aa).

An LCN-type CS-alpha/beta domain is found at 2 to 60 (RDGYIRRKDEFKFKCYVDGKDCDDVCKSEGGSAGYCTALGFLCYCAGLPDDKAWKPTSS). Cystine bridges form between Cys16–Cys37, Cys23–Cys44, and Cys27–Cys46.

The protein belongs to the long (4 C-C) scorpion toxin superfamily. Sodium channel inhibitor family. Beta subfamily. As to expression, expressed by the venom gland.

It localises to the secreted. Its function is as follows. Depressant insect toxins cause a transient contraction paralysis followed by a slow flaccid paralysis. They bind voltage-independently to sodium channels (Nav) and block action potentials, primarily by depolarizing the axonal membrane and suppressing the sodium current. The polypeptide is Putative insect toxin Acra6 (Androctonus crassicauda (Arabian fat-tailed scorpion)).